Here is a 169-residue protein sequence, read N- to C-terminus: CKLF-like MARVEL transmembrane domain-containing protein 1 (169 aa).

The MARVEL domain maps to 17 to 135 (NLKQPETAAA…DAFVVTTKMR (119 aa)). The next 4 helical transmembrane spans lie at 22 to 42 (ETAA…ITQA), 46 to 66 (FITI…IYVL), 79 to 99 (LLDL…AILA), and 110 to 130 (YVGG…AFVV).

The protein belongs to the chemokine-like factor family. As to expression, highly expressed in testis.

It is found in the membrane. This chain is CKLF-like MARVEL transmembrane domain-containing protein 1 (CMTM1), found in Homo sapiens (Human).